Consider the following 496-residue polypeptide: Probable cytosol aminopeptidase (496 aa).

K266 and D271 together coordinate Mn(2+). The active site involves K278. Positions 289, 348, and 350 each coordinate Mn(2+). Residue R352 is part of the active site.

This sequence belongs to the peptidase M17 family. It depends on Mn(2+) as a cofactor.

The protein resides in the cytoplasm. The enzyme catalyses Release of an N-terminal amino acid, Xaa-|-Yaa-, in which Xaa is preferably Leu, but may be other amino acids including Pro although not Arg or Lys, and Yaa may be Pro. Amino acid amides and methyl esters are also readily hydrolyzed, but rates on arylamides are exceedingly low.. The catalysed reaction is Release of an N-terminal amino acid, preferentially leucine, but not glutamic or aspartic acids.. Presumably involved in the processing and regular turnover of intracellular proteins. Catalyzes the removal of unsubstituted N-terminal amino acids from various peptides. This is Probable cytosol aminopeptidase from Pseudomonas syringae pv. syringae (strain B728a).